The primary structure comprises 246 residues: Pyruvate formate-lyase 1-activating enzyme (246 aa).

Residues 16–239 enclose the Radical SAM core domain; the sequence is VDGPGIRFIT…MERVKGILEQ (224 aa). C30, C34, and C37 together coordinate [4Fe-4S] cluster. S-adenosyl-L-methionine contacts are provided by residues 36-38, G79, 130-132, and H203; these read YCH and DLK.

The protein belongs to the organic radical-activating enzymes family. It depends on [4Fe-4S] cluster as a cofactor.

It is found in the cytoplasm. The catalysed reaction is glycyl-[formate C-acetyltransferase] + reduced [flavodoxin] + S-adenosyl-L-methionine = glycin-2-yl radical-[formate C-acetyltransferase] + semiquinone [flavodoxin] + 5'-deoxyadenosine + L-methionine + H(+). Functionally, activation of pyruvate formate-lyase 1 under anaerobic conditions by generation of an organic free radical, using S-adenosylmethionine and reduced flavodoxin as cosubstrates to produce 5'-deoxy-adenosine. The sequence is that of Pyruvate formate-lyase 1-activating enzyme (pflA) from Escherichia coli O157:H7.